The sequence spans 574 residues: 2-succinyl-5-enolpyruvyl-6-hydroxy-3-cyclohexene-1-carboxylate synthase (574 aa).

Belongs to the TPP enzyme family. MenD subfamily. As to quaternary structure, homodimer. Requires Mg(2+) as cofactor. Mn(2+) is required as a cofactor. It depends on thiamine diphosphate as a cofactor.

The catalysed reaction is isochorismate + 2-oxoglutarate + H(+) = 5-enolpyruvoyl-6-hydroxy-2-succinyl-cyclohex-3-ene-1-carboxylate + CO2. It participates in quinol/quinone metabolism; 1,4-dihydroxy-2-naphthoate biosynthesis; 1,4-dihydroxy-2-naphthoate from chorismate: step 2/7. Its pathway is quinol/quinone metabolism; menaquinone biosynthesis. Functionally, catalyzes the thiamine diphosphate-dependent decarboxylation of 2-oxoglutarate and the subsequent addition of the resulting succinic semialdehyde-thiamine pyrophosphate anion to isochorismate to yield 2-succinyl-5-enolpyruvyl-6-hydroxy-3-cyclohexene-1-carboxylate (SEPHCHC). In Rubrobacter xylanophilus (strain DSM 9941 / JCM 11954 / NBRC 16129 / PRD-1), this protein is 2-succinyl-5-enolpyruvyl-6-hydroxy-3-cyclohexene-1-carboxylate synthase.